A 681-amino-acid polypeptide reads, in one-letter code: DNA-directed RNA polymerase subunit beta' (681 aa).

C69, C71, C87, and C90 together coordinate Zn(2+). Mg(2+) is bound by residues D489, D491, and D493.

The protein belongs to the RNA polymerase beta' chain family. RpoC1 subfamily. As to quaternary structure, in plastids the minimal PEP RNA polymerase catalytic core is composed of four subunits: alpha, beta, beta', and beta''. When a (nuclear-encoded) sigma factor is associated with the core the holoenzyme is formed, which can initiate transcription. Requires Mg(2+) as cofactor. It depends on Zn(2+) as a cofactor.

Its subcellular location is the plastid. The protein localises to the chloroplast. It carries out the reaction RNA(n) + a ribonucleoside 5'-triphosphate = RNA(n+1) + diphosphate. Functionally, DNA-dependent RNA polymerase catalyzes the transcription of DNA into RNA using the four ribonucleoside triphosphates as substrates. In Cycas taitungensis (Prince sago), this protein is DNA-directed RNA polymerase subunit beta'.